Consider the following 593-residue polypeptide: UvrABC system protein C (593 aa).

Residues 14–91 (DSPGCYLHKD…IQENMPKYNI (78 aa)) enclose the GIY-YIG domain. Residues 196–231 (NKIVNGLTEKMKSAAMTMEFERAAEYRDLIEAISLL) form the UVR domain.

Belongs to the UvrC family. In terms of assembly, interacts with UvrB in an incision complex.

It localises to the cytoplasm. Functionally, the UvrABC repair system catalyzes the recognition and processing of DNA lesions. UvrC both incises the 5' and 3' sides of the lesion. The N-terminal half is responsible for the 3' incision and the C-terminal half is responsible for the 5' incision. The protein is UvrABC system protein C of Streptococcus agalactiae serotype V (strain ATCC BAA-611 / 2603 V/R).